A 1320-amino-acid polypeptide reads, in one-letter code: Probable inactive ATP-dependent zinc metalloprotease FTSHI 5, chloroplastic (1320 aa).

Residues 1 to 43 (MDFISASSLSSPFSTQLSPIYLSSGIVSLKPRHRVKNRNFGSR) constitute a chloroplast transit peptide. Transmembrane regions (helical) follow at residues 571–591 (LYLKMLACGIPTSVHLMWIPM), 633–653 (NINDDIMMAVVFPVIEFIIPY), and 695–715 (FQWFLWFLIRSSIYGFVLYHV). Residue 824-831 (GERGTGKT) participates in ATP binding.

In the N-terminal section; belongs to the AAA ATPase family. It in the C-terminal section; belongs to the peptidase M41 family. Oligomer.

It localises to the plastid. The protein resides in the chloroplast membrane. In terms of biological role, required for plastid development during embryogenesis. Might be involved in chaperone functions or play a structural role in the thylakoid FtsH complex. This is Probable inactive ATP-dependent zinc metalloprotease FTSHI 5, chloroplastic from Arabidopsis thaliana (Mouse-ear cress).